The chain runs to 322 residues: Mas-related G-protein coupled receptor member X1 (322 aa).

Topologically, residues 1–31 (MDPTISTLDTELTPINGTEETLCYKQTLSLT) are extracellular. N16 carries N-linked (GlcNAc...) asparagine glycosylation. Residues 32-52 (VLTCIVSLVGLTGNAVVLWLL) form a helical membrane-spanning segment. At 53 to 67 (GCRMRRNAFSIYILN) the chain is on the cytoplasmic side. A helical transmembrane segment spans residues 68–88 (LAAADFLFLSGRLIYSLLSFI). The Extracellular portion of the chain corresponds to 89 to 96 (SIPHTISK). Residues 97–117 (ILYPVMMFSYFAGLSFLSAVS) form a helical membrane-spanning segment. Residues 118–144 (TERCLSVLWPIWYRCHRPTHLSAVVCV) lie on the Cytoplasmic side of the membrane. A helical transmembrane segment spans residues 145–165 (LLWALSLLRSILEWMLCGFLF). At 166-177 (SGADSAWCQTSD) the chain is on the extracellular side. Residues 178–198 (FITVAWLIFLCVVLCGSSLVL) form a helical membrane-spanning segment. Residues 199 to 221 (LIRILCGSRKIPLTRLYVTILLT) are Cytoplasmic-facing. The helical transmembrane segment at 222-242 (VLVFLLCGLPFGIQFFLFLWI) threads the bilayer. The Extracellular portion of the chain corresponds to 243–254 (HVDREVLFCHVH). Residues 255 to 275 (LVSIFLSALNSSANPIIYFFV) form a helical membrane-spanning segment. The Cytoplasmic segment spans residues 276 to 322 (GSFRQRQNRQNLKLVLQRALQDASEVDEGGGQLPEEILELSGSRLEQ).

This sequence belongs to the G-protein coupled receptor 1 family. Mas subfamily. In terms of tissue distribution, uniquely localized in a subset of small dorsal root and trigeminal sensory neurons.

Its subcellular location is the cell membrane. Its function is as follows. Orphan receptor. Probably involved in the function of nociceptive neurons. May regulate nociceptor function and/or development, including the sensation or modulation of pain. Potently activated by enkephalins including BAM22 (bovine adrenal medulla peptide 22) and BAM (8-22). BAM22 is the most potent compound and evoked a large and dose-dependent release of intracellular calcium in stably transfected cells. G(alpha)q proteins are involved in the calcium-signaling pathway. Activated by the antimalarial drug, chloroquine. May mediate chloroquine-induced itch, in a histamine-independent manner. This chain is Mas-related G-protein coupled receptor member X1 (MRGPRX1), found in Homo sapiens (Human).